The following is a 208-amino-acid chain: CASP-like protein 2U9 (208 aa).

The Cytoplasmic segment spans residues M1–K27. The helical transmembrane segment at I28 to M48 threads the bilayer. Over V49–G87 the chain is Extracellular. The chain crosses the membrane as a helical span at residues A88 to L108. Over T109–A120 the chain is Cytoplasmic. The helical transmembrane segment at W121–V141 threads the bilayer. Topologically, residues A142–C168 are extracellular. The chain crosses the membrane as a helical span at residues F169–V189. Residues A190–K208 lie on the Cytoplasmic side of the membrane.

The protein belongs to the Casparian strip membrane proteins (CASP) family. As to quaternary structure, homodimer and heterodimers.

It localises to the cell membrane. The protein is CASP-like protein 2U9 of Selaginella moellendorffii (Spikemoss).